The primary structure comprises 216 residues: 3-isopropylmalate dehydratase small subunit (216 aa).

Belongs to the LeuD family. LeuD type 1 subfamily. As to quaternary structure, heterodimer of LeuC and LeuD.

The enzyme catalyses (2R,3S)-3-isopropylmalate = (2S)-2-isopropylmalate. The protein operates within amino-acid biosynthesis; L-leucine biosynthesis; L-leucine from 3-methyl-2-oxobutanoate: step 2/4. Catalyzes the isomerization between 2-isopropylmalate and 3-isopropylmalate, via the formation of 2-isopropylmaleate. In Marinomonas sp. (strain MWYL1), this protein is 3-isopropylmalate dehydratase small subunit.